A 478-amino-acid chain; its full sequence is Sulfate adenylyltransferase subunit 1 (478 aa).

Residues 24 to 240 (KSLLRFLTCG…VLENVDIDAD (217 aa)) form the tr-type G domain. Residues 33–40 (GSVDDGKS) are G1. 33–40 (GSVDDGKS) contacts GTP. Residues 91 to 95 (GITID) form a G2 region. The G3 stretch occupies residues 112–115 (DTPG). Residues 112–116 (DTPGH) and 167–170 (NKMD) contribute to the GTP site. A G4 region spans residues 167–170 (NKMD). Residues 206 to 208 (SAL) form a G5 region.

It belongs to the TRAFAC class translation factor GTPase superfamily. Classic translation factor GTPase family. CysN/NodQ subfamily. As to quaternary structure, heterodimer composed of CysD, the smaller subunit, and CysN.

The enzyme catalyses sulfate + ATP + H(+) = adenosine 5'-phosphosulfate + diphosphate. It functions in the pathway sulfur metabolism; hydrogen sulfide biosynthesis; sulfite from sulfate: step 1/3. Its function is as follows. With CysD forms the ATP sulfurylase (ATPS) that catalyzes the adenylation of sulfate producing adenosine 5'-phosphosulfate (APS) and diphosphate, the first enzymatic step in sulfur assimilation pathway. APS synthesis involves the formation of a high-energy phosphoric-sulfuric acid anhydride bond driven by GTP hydrolysis by CysN coupled to ATP hydrolysis by CysD. This chain is Sulfate adenylyltransferase subunit 1, found in Aliivibrio fischeri (strain MJ11) (Vibrio fischeri).